Consider the following 988-residue polypeptide: DExH-box ATP-dependent RNA helicase DExH9 (988 aa).

Residues 1–27 form a disordered region; sequence MGSVKRKSVEESSDSAPPQKVQREDDS. In terms of domain architecture, Helicase ATP-binding spans 76–232; sequence IKCLDNGESV…WVAKVHQQPC (157 aa). 89–96 contributes to the ATP binding site; the sequence is AHTSAGKT. Positions 180 to 183 match the DEVH box motif; that stretch reads DEVH. One can recognise a Helicase C-terminal domain in the interval 307–509; sequence DIFKLVKMII…SYNMLLNQLR (203 aa).

Belongs to the DExH box helicase family. SKI2 subfamily. In terms of tissue distribution, ubiquitous but preferentially expressed in active tissues.

It is found in the nucleus. Its subcellular location is the nucleolus. It catalyses the reaction ATP + H2O = ADP + phosphate + H(+). In terms of biological role, ATP-dependent RNA helicase that associates with the RNA exosome complex. Required for proper rRNA biogenesis and development. Involved in the 3'-processing of the 7S pre-RNA to the mature 5.8S rRNA and also in the removal of rRNA maturation by-products. This is DExH-box ATP-dependent RNA helicase DExH9 from Arabidopsis thaliana (Mouse-ear cress).